The sequence spans 260 residues: tRNA (guanine-N(1)-)-methyltransferase (260 aa).

S-adenosyl-L-methionine is bound by residues Gly-117 and 137-142 (LGDFVL).

It belongs to the RNA methyltransferase TrmD family. In terms of assembly, homodimer.

It localises to the cytoplasm. The enzyme catalyses guanosine(37) in tRNA + S-adenosyl-L-methionine = N(1)-methylguanosine(37) in tRNA + S-adenosyl-L-homocysteine + H(+). In terms of biological role, specifically methylates guanosine-37 in various tRNAs. This is tRNA (guanine-N(1)-)-methyltransferase from Cupriavidus necator (strain ATCC 17699 / DSM 428 / KCTC 22496 / NCIMB 10442 / H16 / Stanier 337) (Ralstonia eutropha).